The following is a 256-amino-acid chain: Thiazole synthase (256 aa).

Catalysis depends on K95, which acts as the Schiff-base intermediate with DXP. 1-deoxy-D-xylulose 5-phosphate contacts are provided by residues G156, 182 to 183 (AG), and 204 to 205 (NT).

It belongs to the ThiG family. In terms of assembly, homotetramer. Forms heterodimers with either ThiH or ThiS.

The protein resides in the cytoplasm. It carries out the reaction [ThiS sulfur-carrier protein]-C-terminal-Gly-aminoethanethioate + 2-iminoacetate + 1-deoxy-D-xylulose 5-phosphate = [ThiS sulfur-carrier protein]-C-terminal Gly-Gly + 2-[(2R,5Z)-2-carboxy-4-methylthiazol-5(2H)-ylidene]ethyl phosphate + 2 H2O + H(+). It participates in cofactor biosynthesis; thiamine diphosphate biosynthesis. Catalyzes the rearrangement of 1-deoxy-D-xylulose 5-phosphate (DXP) to produce the thiazole phosphate moiety of thiamine. Sulfur is provided by the thiocarboxylate moiety of the carrier protein ThiS. In vitro, sulfur can be provided by H(2)S. The sequence is that of Thiazole synthase from Escherichia fergusonii (strain ATCC 35469 / DSM 13698 / CCUG 18766 / IAM 14443 / JCM 21226 / LMG 7866 / NBRC 102419 / NCTC 12128 / CDC 0568-73).